A 370-amino-acid polypeptide reads, in one-letter code: ABSCISIC ACID-INSENSITIVE 5-like protein 8 (370 aa).

Serine 25, serine 44, and serine 69 each carry phosphoserine. The disordered stretch occupies residues 56-77 (SAEETQEGSQRQGSTTLPPTLS). The span at 62–77 (EGSQRQGSTTLPPTLS) shows a compositional bias: polar residues. Threonine 111 is subject to Phosphothreonine. Polar residues predominate over residues 260-278 (ESSLLSPSPYISNGSTSTR). Residues 260–281 (ESSLLSPSPYISNGSTSTRGGK) are disordered. The region spanning 293–356 (VDKKLRRKIK…MEPGMISLHE (64 aa)) is the bZIP domain. A basic motif region spans residues 295 to 314 (KKLRRKIKNRESAARSRARK). Residues 328–342 (LKKDYEELLKQHVEL) are leucine-zipper. The segment at 349–370 (PGMISLHERPERKLRRTKSDIK) is disordered. Basic and acidic residues predominate over residues 354-370 (LHERPERKLRRTKSDIK).

This sequence belongs to the bZIP family. ABI5 subfamily. DNA-binding heterodimer.

It is found in the nucleus. Functionally, could participate in abscisic acid-regulated gene expression. The polypeptide is ABSCISIC ACID-INSENSITIVE 5-like protein 8 (BZIP15) (Arabidopsis thaliana (Mouse-ear cress)).